The sequence spans 791 residues: Calcium-transporting ATPase CtpE (791 aa).

The next 3 helical transmembrane spans lie at 53–73 (LFVIVLSTGSVINGAFGLLII), 213–233 (ILQFITYLLVPAGLLTIYTQL), and 252–272 (VPMVPEGLVLMTSIAFAVGVV). The 4-aspartylphosphate intermediate role is filled by Asp299. Positions 299, 301, and 530 each coordinate Mg(2+). 6 helical membrane-spanning segments follow: residues 596–616 (VYSVLLAILVGIGGLSAKIFG), 627–647 (IHVTIAAWFTIGIPAFILSLA), 664–684 (AALPSGLVVGTATFVSYLVAY), 697–717 (ASTAALITLLASSLWVLAVVA), 725–745 (VLLVACSMLAYVLIFSIPLAQ), and 757–777 (VTSVALGIGLAGAALIEVLWW).

The protein belongs to the cation transport ATPase (P-type) (TC 3.A.3) family.

Its subcellular location is the cell membrane. The enzyme catalyses Ca(2+)(in) + ATP + H2O = Ca(2+)(out) + ADP + phosphate + H(+). Its function is as follows. P-type ATPase involved in specific uptake of calcium. Essential for growth and maintenance of cell surface integrity under Ca(2+)-deficient conditions. This chain is Calcium-transporting ATPase CtpE, found in Mycolicibacterium smegmatis (strain ATCC 700084 / mc(2)155) (Mycobacterium smegmatis).